The sequence spans 428 residues: Cholecystokinin receptor type A (428 aa).

Topologically, residues 1–41 (MEVADSLLGNGSDVPPPCELGLENETLVCLEQPRAAKEWQP) are extracellular. Residues N10 and N24 are each glycosylated (N-linked (GlcNAc...) asparagine). A disulfide bridge links C18 with C29. A helical transmembrane segment spans residues 42–67 (AVQILLYSLIFLLSVLGNTLVITVLI). Residues 68–77 (RNKRMRTVTN) are Cytoplasmic-facing. A helical transmembrane segment spans residues 78–104 (IFLLSLAVSDLMLCLFCMPFNLIPNLL). Residues 105 to 115 (KDFIFGSAVCK) lie on the Extracellular side of the membrane. An intrachain disulfide couples C114 to C196. Residues 116 to 137 (TTTYFMGTSVSVSTFNLVAISL) form a helical membrane-spanning segment. The Cytoplasmic portion of the chain corresponds to 138 to 157 (ERYGAICKPLQSRVWQTKSH). A helical membrane pass occupies residues 158-178 (ALKVIATTWCLSFTIMTPYPI). Over 179–210 (YSNLVPFTKTNNQTANMCRFLLPNDVMQQSWH) the chain is Extracellular. N-linked (GlcNAc...) asparagine glycosylation is present at N190. A helical transmembrane segment spans residues 211-234 (TFLLLILFLIPGIVMMVAYGLISL). At 235–313 (ELYQGIKFDA…NLMAKKRVIR (79 aa)) the chain is on the cytoplasmic side. Positions 250–269 (ARDRNPSTGSSGRYEDGDGC) are disordered. Residues 314 to 334 (MLMVIVVLFFLCWMPIFSANA) traverse the membrane as a helical segment. Residues 335–349 (WRAYDTASAERRLSG) are Extracellular-facing. Residues 350–373 (TPISFILLLSYTSSCVNPIIYCFM) form a helical membrane-spanning segment. At 374 to 428 (NKRFRLGFLATFPCCPHPGPPGPRGEVGEEEEGRTTGASLSRYSYSHMSASAPGP) the chain is on the cytoplasmic side. A lipid anchor (S-palmitoyl cysteine) is attached at C387. Residues 393 to 428 (PPGPRGEVGEEEEGRTTGASLSRYSYSHMSASAPGP) form a disordered region. Over residues 409-422 (TGASLSRYSYSHMS) the composition is skewed to polar residues.

This sequence belongs to the G-protein coupled receptor 1 family.

It is found in the cell membrane. Receptor for cholecystokinin. Mediates pancreatic growth and enzyme secretion, smooth muscle contraction of the gall bladder and stomach. Has a 1000-fold higher affinity for CCK rather than for gastrin. It modulates feeding and dopamine-induced behavior in the central and peripheral nervous system. This receptor mediates its action by association with G proteins that activate a phosphatidylinositol-calcium second messenger system. This Canis lupus familiaris (Dog) protein is Cholecystokinin receptor type A (CCKAR).